The sequence spans 460 residues: ATP synthase subunit beta (460 aa).

150–157 (GGAGVGKT) contacts ATP.

It belongs to the ATPase alpha/beta chains family. As to quaternary structure, F-type ATPases have 2 components, CF(1) - the catalytic core - and CF(0) - the membrane proton channel. CF(1) has five subunits: alpha(3), beta(3), gamma(1), delta(1), epsilon(1). CF(0) has three main subunits: a(1), b(2) and c(9-12). The alpha and beta chains form an alternating ring which encloses part of the gamma chain. CF(1) is attached to CF(0) by a central stalk formed by the gamma and epsilon chains, while a peripheral stalk is formed by the delta and b chains.

It is found in the cell inner membrane. It catalyses the reaction ATP + H2O + 4 H(+)(in) = ADP + phosphate + 5 H(+)(out). Produces ATP from ADP in the presence of a proton gradient across the membrane. The catalytic sites are hosted primarily by the beta subunits. This is ATP synthase subunit beta from Proteus mirabilis (strain HI4320).